The sequence spans 464 residues: UDP-N-acetylmuramoyl-tripeptide--D-alanyl-D-alanine ligase (464 aa).

Residue 125–131 (GSNGKTT) participates in ATP binding.

This sequence belongs to the MurCDEF family. MurF subfamily.

Its subcellular location is the cytoplasm. It carries out the reaction D-alanyl-D-alanine + UDP-N-acetyl-alpha-D-muramoyl-L-alanyl-gamma-D-glutamyl-meso-2,6-diaminopimelate + ATP = UDP-N-acetyl-alpha-D-muramoyl-L-alanyl-gamma-D-glutamyl-meso-2,6-diaminopimeloyl-D-alanyl-D-alanine + ADP + phosphate + H(+). It participates in cell wall biogenesis; peptidoglycan biosynthesis. Involved in cell wall formation. Catalyzes the final step in the synthesis of UDP-N-acetylmuramoyl-pentapeptide, the precursor of murein. The chain is UDP-N-acetylmuramoyl-tripeptide--D-alanyl-D-alanine ligase from Borreliella burgdorferi (strain ATCC 35210 / DSM 4680 / CIP 102532 / B31) (Borrelia burgdorferi).